We begin with the raw amino-acid sequence, 534 residues long: C-type lectin domain family 18 member A (534 aa).

The segment at 47–88 is disordered; the sequence is GALPVAGKPEPMARSLASAPVSPWHHMDRGSTTPAKARSHSA. In terms of domain architecture, SCP spans 139–270; it reads LTAHNRLRSR…EAMEAFVCAY (132 aa). Residues 316 to 349 form the EGF-like domain; sequence PRNPCRMSCRNLGHLNISTCRCHCQPGYTGRYCQ. 4 disulfides stabilise this stretch: cysteine 324/cysteine 337, cysteine 339/cysteine 348, cysteine 415/cysteine 520, and cysteine 496/cysteine 512. In terms of domain architecture, C-type lectin spans 394–521; that stretch reads IDGDCFMVSP…CKTRNRYICQ (128 aa).

Its subcellular location is the secreted. In Mus musculus (Mouse), this protein is C-type lectin domain family 18 member A (Clec18a).